We begin with the raw amino-acid sequence, 105 residues long: Large ribosomal subunit protein uL23 (105 aa).

Belongs to the universal ribosomal protein uL23 family. In terms of assembly, part of the 50S ribosomal subunit. Contacts protein L29, and trigger factor when it is bound to the ribosome.

One of the early assembly proteins it binds 23S rRNA. One of the proteins that surrounds the polypeptide exit tunnel on the outside of the ribosome. Forms the main docking site for trigger factor binding to the ribosome. This Ureaplasma urealyticum serovar 10 (strain ATCC 33699 / Western) protein is Large ribosomal subunit protein uL23.